Reading from the N-terminus, the 308-residue chain is D-alanine--D-alanine ligase (308 aa).

Positions 103–302 constitute an ATP-grasp domain; sequence KTVMATAGVP…FDELVQWMVE (200 aa). 130 to 184 is an ATP binding site; that stretch reads MAPPYVIKPVADGSSVGVFMVTEAHEHPPQELFRDDWPHGEQLLVEKYVAGKELT. Residues Asp-252, Glu-269, and Asn-271 each coordinate Mg(2+).

This sequence belongs to the D-alanine--D-alanine ligase family. It depends on Mg(2+) as a cofactor. The cofactor is Mn(2+).

It localises to the cytoplasm. The enzyme catalyses 2 D-alanine + ATP = D-alanyl-D-alanine + ADP + phosphate + H(+). The protein operates within cell wall biogenesis; peptidoglycan biosynthesis. Functionally, cell wall formation. This is D-alanine--D-alanine ligase from Rhodopseudomonas palustris (strain BisB18).